The primary structure comprises 591 residues: L-fucose isomerase (591 aa).

Catalysis depends on proton acceptor residues Glu337 and Asp361. Glu337, Asp361, and His528 together coordinate Mn(2+).

Belongs to the L-fucose isomerase family. Homohexamer. It depends on Mn(2+) as a cofactor.

Its subcellular location is the cytoplasm. The enzyme catalyses L-fucose = L-fuculose. It participates in carbohydrate degradation; L-fucose degradation; L-lactaldehyde and glycerone phosphate from L-fucose: step 1/3. Functionally, converts the aldose L-fucose into the corresponding ketose L-fuculose. This Escherichia coli O6:H1 (strain CFT073 / ATCC 700928 / UPEC) protein is L-fucose isomerase.